The chain runs to 494 residues: Ketol-acid reductoisomerase (NADP(+)) (494 aa).

The KARI N-terminal Rossmann domain maps to 14–208 (LDQLGRCRFM…GGHRAGVLES (195 aa)). Residues 45–48 (CGAQ), Arg68, Arg76, Ser78, and 108–110 (DKQ) each bind NADP(+). The active site involves His132. Gly158 contributes to the NADP(+) binding site. 2 KARI C-terminal knotted domains span residues 209-344 (SFVA…NYPV) and 345-487 (TDVE…MTDM). 4 residues coordinate Mg(2+): Asp217, Glu221, Glu389, and Glu393. Ser414 is a binding site for substrate.

The protein belongs to the ketol-acid reductoisomerase family. The cofactor is Mg(2+).

The enzyme catalyses (2R)-2,3-dihydroxy-3-methylbutanoate + NADP(+) = (2S)-2-acetolactate + NADPH + H(+). The catalysed reaction is (2R,3R)-2,3-dihydroxy-3-methylpentanoate + NADP(+) = (S)-2-ethyl-2-hydroxy-3-oxobutanoate + NADPH + H(+). It functions in the pathway amino-acid biosynthesis; L-isoleucine biosynthesis; L-isoleucine from 2-oxobutanoate: step 2/4. It participates in amino-acid biosynthesis; L-valine biosynthesis; L-valine from pyruvate: step 2/4. Functionally, involved in the biosynthesis of branched-chain amino acids (BCAA). Catalyzes an alkyl-migration followed by a ketol-acid reduction of (S)-2-acetolactate (S2AL) to yield (R)-2,3-dihydroxy-isovalerate. In the isomerase reaction, S2AL is rearranged via a Mg-dependent methyl migration to produce 3-hydroxy-3-methyl-2-ketobutyrate (HMKB). In the reductase reaction, this 2-ketoacid undergoes a metal-dependent reduction by NADPH to yield (R)-2,3-dihydroxy-isovalerate. The sequence is that of Ketol-acid reductoisomerase (NADP(+)) from Photobacterium profundum (strain SS9).